The chain runs to 1040 residues: Regulator of telomere elongation helicase 1 homolog (1040 aa).

Residues 52–355 enclose the Helicase ATP-binding domain; that stretch reads RGINVEFPFE…KGLLLKLQEL (304 aa). 87–94 provides a ligand contact to ATP; it reads SPTGTGKT. The segment at 117–137 is disordered; it reads RKNSAIPWSDSDEPLSQSGGG. [4Fe-4S] cluster is bound by residues Cys-181, Cys-202, Cys-210, and Cys-246. A DEAH box motif is present at residues 289–292; it reads DEAH. Positions 926–949 are disordered; that stretch reads KVPESQGSASSSVLTAKGNGGGDK. The span at 930 to 939 shows a compositional bias: polar residues; sequence SQGSASSSVL. The PIP-box; degenerate signature appears at 992–999; it reads QSIVQLFC.

It belongs to the helicase family. RAD3/XPD subfamily.

The protein localises to the nucleus. It carries out the reaction ATP + H2O = ADP + phosphate + H(+). Its function is as follows. A probable ATP-dependent DNA helicase implicated in DNA replication, DNA repair and the maintenance of genomic stability. Acts as an anti-recombinase to counteract toxic recombination and limit crossover during meiosis. Regulates meiotic recombination and crossover homeostasis by physically dissociating strand invasion events and thereby promotes noncrossover repair by meiotic synthesis dependent strand annealing (SDSA) as well as disassembly of D loop recombination intermediates. Also plays a role in preserving the stability of 45S rDNA repeats. The polypeptide is Regulator of telomere elongation helicase 1 homolog (Arabidopsis thaliana (Mouse-ear cress)).